The following is a 623-amino-acid chain: MTFKDFDAEEKLFLRRVIVAFGVVVVCFGILIFNLYNLQIRQHHYYTTRSNENDIKMLPVAPTRGIIYDRNGIPLVRNVTWYDIAVTPYKIADMDALLKQLTPIVDLSPDDISDFRRALKSSSRYRPVVLKNALTDVEIARFAVNQFHFNGVTINSYQDRQYPYGAELAHVLGYVSKINDNDLKALDKKGLAENYAADHNIGKQGIERYYENDLHGKTGYQEVEVDNHGRIVRLLKDVPPIAGKNIHLTLDLHLQEYIESLLAGQRAAVLVEDPHDGSVLAMVSMPSYDPNPFVKGISYQDYGKLLHDKNLPLINRVTQGLYPPASTVKPYMAMSALLCGIITPQTTFFGAPTWTLPGTQRHYRDWKKTGHGMLDVTKAIEESADTFFYQVAYMMGIDRIDTMLSQFGYGKPTGIDLNEEYDGLLPSRAWKQRVHKKAWYQGDTISVGIGQGYWIATPIQMVKAMVALINNGKVIAPHLLLNEESGKTVVPYRPSGTPAQIADPASPYWGLVRQAMYGMANAPNGTGYKFFHTAPYGIAAKSGTSQVFSLKENQTYNAKMIPIRLRDHVFYTAFAPYKNPKVAIALILENGGSDGVTAAPIMRKILDHLFDPQADTTQPDQAP.

A helical transmembrane segment spans residues 17-37; the sequence is VIVAFGVVVVCFGILIFNLYN. Residue serine 326 is the Acyl-ester intermediate of the active site.

This sequence belongs to the transpeptidase family. MrdA subfamily.

The protein localises to the cell inner membrane. It carries out the reaction Preferential cleavage: (Ac)2-L-Lys-D-Ala-|-D-Ala. Also transpeptidation of peptidyl-alanyl moieties that are N-acyl substituents of D-alanine.. It functions in the pathway cell wall biogenesis; peptidoglycan biosynthesis. In terms of biological role, catalyzes cross-linking of the peptidoglycan cell wall. The protein is Peptidoglycan D,D-transpeptidase MrdA of Salmonella typhimurium (strain SL1344).